A 158-amino-acid polypeptide reads, in one-letter code: Cyclic pyranopterin monophosphate synthase (158 aa).

Residues 75 to 77 and 113 to 114 each bind substrate; these read LCH and ME. Asp-128 is a catalytic residue.

It belongs to the MoaC family. Homohexamer; trimer of dimers.

The catalysed reaction is (8S)-3',8-cyclo-7,8-dihydroguanosine 5'-triphosphate = cyclic pyranopterin phosphate + diphosphate. The protein operates within cofactor biosynthesis; molybdopterin biosynthesis. In terms of biological role, catalyzes the conversion of (8S)-3',8-cyclo-7,8-dihydroguanosine 5'-triphosphate to cyclic pyranopterin monophosphate (cPMP). The protein is Cyclic pyranopterin monophosphate synthase of Ralstonia pickettii (strain 12J).